Reading from the N-terminus, the 303-residue chain is Polyisoprenyl-teichoic acid--peptidoglycan teichoic acid transferase TagU (303 aa).

Over 1–4 the chain is Cytoplasmic; the sequence is MKKK. Residues 5-25 form a helical; Signal-anchor for type II membrane protein membrane-spanning segment; the sequence is ILFWVLGILGVLIIGGGIYAY. Over 26 to 303 the chain is Extracellular; that stretch reads NVYSSVSNTL…KLRTHLEVTK (278 aa).

This sequence belongs to the LytR/CpsA/Psr (LCP) family.

The protein localises to the cell membrane. The protein operates within cell wall biogenesis. Functionally, may catalyze the final step in cell wall teichoic acid biosynthesis, the transfer of the anionic cell wall polymers (APs) from their lipid-linked precursor to the cell wall peptidoglycan (PG). This Bacillus cereus (strain ZK / E33L) protein is Polyisoprenyl-teichoic acid--peptidoglycan teichoic acid transferase TagU.